We begin with the raw amino-acid sequence, 264 residues long: Major prion protein (264 aa).

The N-terminal stretch at 1 to 24 is a signal peptide; sequence MVKSHIGSWILVLFVAMWSDVGLC. The tract at residues 25-241 is interaction with GRB2, ERI3 and SYN1; sequence KKRPKPGGGW…ESQAYYQRGA (217 aa). Positions 28–118 are disordered; the sequence is PKPGGGWNTG…QWNKPSKPKT (91 aa). Low complexity predominate over residues 37–54; the sequence is GGSRYPGPGSPGGNRYPP. 6 consecutive repeat copies span residues 54–62, 63–70, 71–78, 79–86, 87–94, and 95–103. The 6 X 8 AA tandem repeats of P-H-G-G-G-W-G-Q stretch occupies residues 54–103; the sequence is PQGGGGWGQPHGGGWGQPHGGGWGQPHGGGWGQPHGGGWGQPHGGGGWGQ. Over residues 55–107 the composition is skewed to gly residues; the sequence is QGGGGWGQPHGGGWGQPHGGGWGQPHGGGWGQPHGGGWGQPHGGGGWGQGGTH. Positions 72, 73, 74, 80, 81, 82, 88, 89, 90, 96, and 98 each coordinate Cu(2+). An intrachain disulfide couples Cys190 to Cys225. Residues Asn192 and Asn208 are each glycosylated (N-linked (GlcNAc...) asparagine). A lipid anchor (GPI-anchor amidated alanine) is attached at Ala241. Positions 242-264 are cleaved as a propeptide — removed in mature form; that stretch reads SVILFSSPPVILLISFLIFLIVG.

This sequence belongs to the prion family. As to quaternary structure, monomer and homodimer. Has a tendency to aggregate into amyloid fibrils containing a cross-beta spine, formed by a steric zipper of superposed beta-strands. Soluble oligomers may represent an intermediate stage on the path to fibril formation. Copper binding may promote oligomerization. Interacts with GRB2, APP, ERI3/PRNPIP and SYN1. Mislocalized cytosolically exposed PrP interacts with MGRN1; this interaction alters MGRN1 subcellular location and causes lysosomal enlargement. Interacts with KIAA1191.

It localises to the cell membrane. Its subcellular location is the golgi apparatus. Its primary physiological function is unclear. Has cytoprotective activity against internal or environmental stresses. May play a role in neuronal development and synaptic plasticity. May be required for neuronal myelin sheath maintenance. May play a role in iron uptake and iron homeostasis. Soluble oligomers are toxic to cultured neuroblastoma cells and induce apoptosis (in vitro). Association with GPC1 (via its heparan sulfate chains) targets PRNP to lipid rafts. Also provides Cu(2+) or Zn(2+) for the ascorbate-mediated GPC1 deaminase degradation of its heparan sulfate side chains. In Ailuropoda melanoleuca (Giant panda), this protein is Major prion protein (PRNP).